The sequence spans 680 residues: MIDRYKHQQLRIGLVSPQQISAWATKIIPNGEIVGEVTKPYTFHYKTNKPEKDGLFCERIFGPIKSGICACGNYRVIGDEKDDPKFCEQCGVEFVDSRIRRYQMGYIKLTCPVTHVWYLKRLPSYIANLLDKPLKELEGLVYCDFSFARPITKKPTFLRLRGSFEYEIQSWKYSIPLFFTTQGFDIFRNREISTGASAIREQLADLDLRIIIENSLVEWKQLGEEGPTGNEWEDRKIVRRKDFLVRRMELAKHFIRTNIEPEWMVLCLLPVLPPELRPIIQIEGGKLMSSDINELYRRVIYRNNTLTDLLTTSRSTPGELVMCQEKLVQEAVDTLLDNGIRGQPMRDGHNKVYKSFSDVIEGKEGRFRETLLGKRVDYSGRSVIVVGPSLSLHRCGLPREIAIELFQTFVIRGLIRQHLASNIGVAKSQIREKKPIVWEILQEVMQGHPVLLNRAPTLHRLGIQSFQPILVEGRTICLHPLVCKGFNADFDGDQMAVHVPLSLEAQAEARLLMFSHMNLLSPAIGDPISVPTQDMLIGLYVLTSGTRRGICANRYNPCNRKNYQNERIYETNYKYTKEPFFCNSYDAIGAYRQKRINLDSPLWLRWQLDQRVIASKEVPIEVHYESFGNYHEIYAHYLIVRSVKKETFCIYIRTTVGHISFYRELEEAVQGFSQACSYDT.

4 residues coordinate Zn(2+): Cys-69, Cys-71, Cys-87, and Cys-90. Positions 489, 491, and 493 each coordinate Mg(2+).

This sequence belongs to the RNA polymerase beta' chain family. RpoC1 subfamily. In terms of assembly, in plastids the minimal PEP RNA polymerase catalytic core is composed of four subunits: alpha, beta, beta', and beta''. When a (nuclear-encoded) sigma factor is associated with the core the holoenzyme is formed, which can initiate transcription. Requires Mg(2+) as cofactor. Zn(2+) is required as a cofactor.

The protein resides in the plastid. It is found in the chloroplast. The enzyme catalyses RNA(n) + a ribonucleoside 5'-triphosphate = RNA(n+1) + diphosphate. Functionally, DNA-dependent RNA polymerase catalyzes the transcription of DNA into RNA using the four ribonucleoside triphosphates as substrates. This Nasturtium officinale (Watercress) protein is DNA-directed RNA polymerase subunit beta'.